The primary structure comprises 266 residues: Adaptin ear-binding coat-associated protein 2 (266 aa).

Disordered regions lie at residues 165–198 (MRKKEGAAGTPRARPTSAGGLSLLPPPPGGKSST) and 245–266 (DFTKSTGSPSSQSQPGTGWVQF). Ser181 carries the phosphoserine modification. 2 short sequence motifs (WXXF motif) span residues 243–246 (WGDF) and 263–266 (WVQF). Residues 249–266 (STGSPSSQSQPGTGWVQF) show a composition bias toward low complexity.

The protein belongs to the NECAP family. In terms of assembly, interacts with AP1G1 and AP2A1 components of the adapter protein complexes AP-1 and AP-2. Interacts with the GAE domain proteins GGA1, GGA2 and GGA3. As to expression, expressed in brain, heart, kidney, liver, lung, skeletal muscles and testis (at protein level).

It localises to the cytoplasmic vesicle. The protein localises to the clathrin-coated vesicle membrane. The protein resides in the cell membrane. Its function is as follows. Involved in endocytosis. This Mus musculus (Mouse) protein is Adaptin ear-binding coat-associated protein 2 (Necap2).